The primary structure comprises 127 residues: Glycine cleavage system H protein (127 aa).

One can recognise a Lipoyl-binding domain in the interval 24 to 105 (TALVGITDFA…YGEGWMVKMK (82 aa)). Lysine 65 is modified (N6-lipoyllysine).

It belongs to the GcvH family. The glycine cleavage system is composed of four proteins: P, T, L and H. The cofactor is (R)-lipoate.

Its function is as follows. The glycine cleavage system catalyzes the degradation of glycine. The H protein shuttles the methylamine group of glycine from the P protein to the T protein. The polypeptide is Glycine cleavage system H protein (Chlorobium phaeovibrioides (strain DSM 265 / 1930) (Prosthecochloris vibrioformis (strain DSM 265))).